The following is a 96-amino-acid chain: Large ribosomal subunit protein bL28 (96 aa).

Positions 1-22 (MSRRCELTGKGPMTGNNVSHAN) are disordered.

The protein belongs to the bacterial ribosomal protein bL28 family.

This is Large ribosomal subunit protein bL28 from Ruegeria sp. (strain TM1040) (Silicibacter sp.).